Consider the following 101-residue polypeptide: MYISRNLEQWNAFLQMLKIAFEENKAQEFLTLLLTADERDAVGLRLQIVSQLIDKNMPQREIQQNLNTSAATITRGSNMIKTMDPDFMQWMKQHLDLIEKN.

The DNA-binding element occupies 59–82 (QREIQQNLNTSAATITRGSNMIKT).

It belongs to the TrpR family. In terms of assembly, homodimer.

It is found in the cytoplasm. Functionally, this protein is an aporepressor. When complexed with L-tryptophan it binds the operator region of the trp operon and prevents the initiation of transcription. The sequence is that of Trp operon repressor homolog from Haemophilus influenzae (strain 86-028NP).